Reading from the N-terminus, the 143-residue chain is Large ribosomal subunit protein uL11 (143 aa).

Belongs to the universal ribosomal protein uL11 family. As to quaternary structure, part of the ribosomal stalk of the 50S ribosomal subunit. Interacts with L10 and the large rRNA to form the base of the stalk. L10 forms an elongated spine to which L12 dimers bind in a sequential fashion forming a multimeric L10(L12)X complex. Post-translationally, one or more lysine residues are methylated.

Functionally, forms part of the ribosomal stalk which helps the ribosome interact with GTP-bound translation factors. The polypeptide is Large ribosomal subunit protein uL11 (Clavibacter michiganensis subsp. michiganensis (strain NCPPB 382)).